A 529-amino-acid polypeptide reads, in one-letter code: Putative inorganic phosphate cotransporter (529 aa).

A run of 8 helical transmembrane segments spans residues 37-57 (FATRYFVTFMLFLGMANAYVM), 110-130 (YILSSFFYGYVITQIPFGILA), 148-168 (VFAFLVPVAARGGGVWGLCAV), 202-222 (AVYAGAQFGTIISMPLSGLLA), 232-252 (SIFYVFGIVGTVWSIAFLIFV), 338-358 (LPYLAMWLFSMFISVVADWMI), 429-449 (FLMSITNCSANLAGLLAPIAA), and 466-486 (IVFFIAAFVYIICGTFYNIFG). The interval 495–529 (NPEDDEQKPALQTTVTTSPARLSNGSTAPAAISSS) is disordered. Residues 504-529 (ALQTTVTTSPARLSNGSTAPAAISSS) are compositionally biased toward polar residues.

Belongs to the major facilitator superfamily. Sodium/anion cotransporter family.

The protein localises to the membrane. In terms of biological role, may be an inorganic phosphate cotransporter. This chain is Putative inorganic phosphate cotransporter (Picot), found in Drosophila melanogaster (Fruit fly).